The chain runs to 436 residues: Histidine--tRNA ligase (436 aa).

Belongs to the class-II aminoacyl-tRNA synthetase family. As to quaternary structure, homodimer.

The protein localises to the cytoplasm. It catalyses the reaction tRNA(His) + L-histidine + ATP = L-histidyl-tRNA(His) + AMP + diphosphate + H(+). The protein is Histidine--tRNA ligase of Prochlorococcus marinus (strain MIT 9313).